The following is a 177-amino-acid chain: Coatomer subunit zeta-1 (177 aa).

Methionine 1 carries the post-translational modification N-acetylmethionine.

This sequence belongs to the adaptor complexes small subunit family. As to quaternary structure, oligomeric complex that consists of at least the alpha, beta, beta', gamma, delta, epsilon and zeta subunits.

The protein resides in the cytoplasm. Its subcellular location is the golgi apparatus membrane. It is found in the cytoplasmic vesicle. It localises to the COPI-coated vesicle membrane. Functionally, the coatomer is a cytosolic protein complex that binds to dilysine motifs and reversibly associates with Golgi non-clathrin-coated vesicles, which further mediate biosynthetic protein transport from the ER, via the Golgi up to the trans Golgi network. Coatomer complex is required for budding from Golgi membranes, and is essential for the retrograde Golgi-to-ER transport of dilysine-tagged proteins. The zeta subunit may be involved in regulating the coat assembly and, hence, the rate of biosynthetic protein transport due to its association-dissociation properties with the coatomer complex. This chain is Coatomer subunit zeta-1 (COPZ1), found in Homo sapiens (Human).